Here is a 248-residue protein sequence, read N- to C-terminus: MRLLKTEAIVLKNNLIGETDKIATLFTKSYGKLQAVAKGARRSKSRFVNAIRPFVVANYVIFEGQNYYYIDQWELIEAHKNIEKDLAKFSVASYIAETINKILEENQKSERLYLFLKHSLKAVDELQIDPLIFISSYNLKLVSLLGYMPQLDNCVVCGKRENLKYFSNSCGGAVCINCKNKCFDAKPLHEVTLKAIKYFLKGDYDKLQNIKVSGVIKEEVDKIITAYMKEHLEIEFKSKDFINNLQNM.

It belongs to the RecO family.

Involved in DNA repair and RecF pathway recombination. The chain is DNA repair protein RecO from Thermoanaerobacter sp. (strain X514).